The sequence spans 141 residues: 3-hydroxyacyl-[acyl-carrier-protein] dehydratase FabZ (141 aa).

His49 is an active-site residue.

It belongs to the thioester dehydratase family. FabZ subfamily.

The protein localises to the cytoplasm. The catalysed reaction is a (3R)-hydroxyacyl-[ACP] = a (2E)-enoyl-[ACP] + H2O. Functionally, involved in unsaturated fatty acids biosynthesis. Catalyzes the dehydration of short chain beta-hydroxyacyl-ACPs and long chain saturated and unsaturated beta-hydroxyacyl-ACPs. This Enterococcus faecalis (strain ATCC 700802 / V583) protein is 3-hydroxyacyl-[acyl-carrier-protein] dehydratase FabZ (fabZ2).